The following is a 354-amino-acid chain: D-alanine--D-alanine ligase (354 aa).

In terms of domain architecture, ATP-grasp spans 154-348; the sequence is RSWFLTNNIN…FTNLIEEIIK (195 aa). Residue 181–232 coordinates ATP; sequence MKRPYVIKPITQGSSIGIEVIFEEDDFNFANYDFPYGDQVIIEKYIKGRELQ. Positions 301, 315, and 317 each coordinate Mg(2+).

Belongs to the D-alanine--D-alanine ligase family. It depends on Mg(2+) as a cofactor. Mn(2+) serves as cofactor.

The protein resides in the cytoplasm. The catalysed reaction is 2 D-alanine + ATP = D-alanyl-D-alanine + ADP + phosphate + H(+). The protein operates within cell wall biogenesis; peptidoglycan biosynthesis. In terms of biological role, cell wall formation. The polypeptide is D-alanine--D-alanine ligase (Rickettsia canadensis (strain McKiel)).